The sequence spans 421 residues: uncharacterized protein (421 aa).

This is an uncharacterized protein from Acanthamoeba polyphaga (Amoeba).